A 463-amino-acid polypeptide reads, in one-letter code: Major capsid protein (463 aa).

Belongs to the NCLDV major capsid protein family. In terms of assembly, homomultimer.

The protein resides in the virion. Functionally, major capsid protein that self assembles to form a T=133 or T=147 icosahedral capsid. In Dryophytes versicolor (chameleon treefrog), this protein is Major capsid protein.